The following is a 106-amino-acid chain: uncharacterized protein (106 aa).

The HTH hxlR-type domain occupies 1-93 (MSIFYVLGKK…WEAKWKEAKI (93 aa)).

This is an uncharacterized protein from Methanocaldococcus jannaschii (strain ATCC 43067 / DSM 2661 / JAL-1 / JCM 10045 / NBRC 100440) (Methanococcus jannaschii).